The following is a 272-amino-acid chain: Pyridoxal phosphate phosphatase YbhA (272 aa).

Aspartate 9 (nucleophile) is an active-site residue. Aspartate 9 contributes to the Mg(2+) binding site. Leucine 10 serves as a coordination point for phosphate. Aspartate 11 lines the Mg(2+) pocket. Phosphate-binding positions include 43 to 44 (TG) and lysine 200. Aspartate 223 provides a ligand contact to Mg(2+). Residue asparagine 226 participates in phosphate binding.

The protein belongs to the HAD-like hydrolase superfamily. CbbY/CbbZ/Gph/YieH family. Mg(2+) serves as cofactor. Mn(2+) is required as a cofactor. It depends on Co(2+) as a cofactor. The cofactor is Zn(2+).

The enzyme catalyses pyridoxal 5'-phosphate + H2O = pyridoxal + phosphate. Catalyzes the dephosphorylation of pyridoxal-phosphate (PLP). Can also hydrolyze erythrose-4-phosphate (Ery4P) and fructose-1,6-bis-phosphate (Fru1,6bisP). This Escherichia coli (strain K12) protein is Pyridoxal phosphate phosphatase YbhA (ybhA).